The chain runs to 133 residues: MIIGLGNDMIDIRRIEKILIRHSSRFIQRIFTDIEQNKSENFPKRSYAYAKRFAAKEACAKALGTGIAYGVNWRDIGIVNSPSGKPTIKLTNHAQIQLEKLLPSNHDAFIHLSMTDDFPWAQAFVIIEALPRG.

Asp8 and Glu57 together coordinate Mg(2+).

This sequence belongs to the P-Pant transferase superfamily. AcpS family. It depends on Mg(2+) as a cofactor.

The protein resides in the cytoplasm. It catalyses the reaction apo-[ACP] + CoA = holo-[ACP] + adenosine 3',5'-bisphosphate + H(+). Functionally, transfers the 4'-phosphopantetheine moiety from coenzyme A to a Ser of acyl-carrier-protein. The protein is Holo-[acyl-carrier-protein] synthase of Bartonella bacilliformis (strain ATCC 35685 / KC583 / Herrer 020/F12,63).